We begin with the raw amino-acid sequence, 74 residues long: Protein SlyX homolog (74 aa).

Belongs to the SlyX family.

This chain is Protein SlyX homolog, found in Aliivibrio salmonicida (strain LFI1238) (Vibrio salmonicida (strain LFI1238)).